Here is a 35-residue protein sequence, read N- to C-terminus: Potassium channel toxin alpha-KTx 23.2 (35 aa).

3 disulfide bridges follow: Cys6/Cys26, Cys12/Cys31, and Cys16/Cys33.

This sequence belongs to the short scorpion toxin superfamily. Potassium channel inhibitor family. Alpha-KTx 23 subfamily. In terms of tissue distribution, expressed by the venom gland.

The protein resides in the secreted. In terms of biological role, selectively and irreversibly binds (K(d)=2.9 pM) and blocks Kv1.3/KCNA3 potassium channels of human T-lymphocytes. Weakly blocks Kv1.2/KCNA2 (9%). The sequence is that of Potassium channel toxin alpha-KTx 23.2 from Vaejovis mexicanus smithi (Mexican scorpion).